The chain runs to 600 residues: MDKSKIRNFSIIAHIDHGKSTLADRILELTNTVEKREMQDQLLDSMDIERERGITIKLNSVQLKYHSKDDKDYIFNLIDTPGHVDFTYEVSRSLAACEGAILVVDASQGVEAQTLANVYLAIDSNLEIIPVINKIDLPSADVDKVKQEIEEIIGLDCSNAPLISAKTGLNVQDVLQAIVDKIPPPSDAIDNAPLKALIFDSYYDKYLGVVMSIRLKQGMLKVGDKIKLMSTNAEYEVTSLGIKTPKIVKKDFLEAGEVGWVAASIKTIKDVNVGDTITSVLNPAKEPLDGYKKLKPMVYCGIYPIDTNKYQDFKEALEKIELSDSSLVYEPETSQALGFGFRCGFLGLLHMEVIQERLEREYNLELIATAPSVVYKVHLTNKQVIELDNPALLPEAQKISKIEEPFVEIKIATPSEYIGDLMNLCQNKLGIYKNMEVIDNNRRILIYQMPLAEIIFDFFNKLKSISKGYASFEYELIGYKESKLVRMDIKLNGEMVDAFSMIVNQKFAYQRGSALTLKLKELIPRQNFEVPVQATIGNKVISRETIKAYRKDVTWKLHAADKSRRKKLLEKQKEGKKKMKEIGTVEVPQEAFVAILKIDD.

Positions 4 to 186 constitute a tr-type G domain; sequence SKIRNFSIIA…AIVDKIPPPS (183 aa). Residues 16-21 and 133-136 contribute to the GTP site; these read DHGKST and NKID.

It belongs to the TRAFAC class translation factor GTPase superfamily. Classic translation factor GTPase family. LepA subfamily.

It is found in the cell membrane. The enzyme catalyses GTP + H2O = GDP + phosphate + H(+). Its function is as follows. Required for accurate and efficient protein synthesis under certain stress conditions. May act as a fidelity factor of the translation reaction, by catalyzing a one-codon backward translocation of tRNAs on improperly translocated ribosomes. Back-translocation proceeds from a post-translocation (POST) complex to a pre-translocation (PRE) complex, thus giving elongation factor G a second chance to translocate the tRNAs correctly. Binds to ribosomes in a GTP-dependent manner. This Mycoplasma capricolum subsp. capricolum (strain California kid / ATCC 27343 / NCTC 10154) protein is Elongation factor 4.